A 403-amino-acid polypeptide reads, in one-letter code: Acetyl-CoA acetyltransferase IB (403 aa).

Cys-91 serves as the catalytic Acyl-thioester intermediate. Residues His-353 and Cys-383 each act as proton acceptor in the active site. The Microbody targeting signal signature appears at 401-403; sequence AKL.

This sequence belongs to the thiolase-like superfamily. Thiolase family. In terms of assembly, multimeric.

It localises to the peroxisome. The enzyme catalyses 2 acetyl-CoA = acetoacetyl-CoA + CoA. Its pathway is metabolic intermediate biosynthesis; (R)-mevalonate biosynthesis; (R)-mevalonate from acetyl-CoA: step 1/3. This is Acetyl-CoA acetyltransferase IB (PACTB) from Candida tropicalis (Yeast).